Reading from the N-terminus, the 346-residue chain is Cytosolic sulfotransferase 17 (346 aa).

Residue 89–94 coordinates 3'-phosphoadenylyl sulfate; sequence KTGTTW. His-151 acts as the Proton acceptor in catalysis. Residues Arg-173, Ser-181, Tyr-239, and 309–311 each bind 3'-phosphoadenylyl sulfate; that span reads RKG.

This sequence belongs to the sulfotransferase 1 family. As to expression, highly expressed in roots, stems and mature leaves. Low expression in young leaves and flowers. Barely detected in siliques.

It localises to the cytoplasm. The catalysed reaction is an aliphatic (Z)-desulfo-glucosinolate + 3'-phosphoadenylyl sulfate = a (Z)-omega-(methylsulfanyl)-N-sulfo-alkylhydroximate S-glucoside + adenosine 3',5'-bisphosphate + H(+). Inhibited by phosphoadenosine 5'-phosphate (PAP). Functionally, sulfotransferase that utilizes 3'-phospho-5'-adenylyl sulfate (PAPS) as sulfonate donor to catalyze the sulfate conjugation of desulfo-glucosinolates (dsGSs), the final step in the biosynthesis of the glucosinolate core structure. Substrate preference is desulfo-benzyl glucosinolate &gt; desulfo-6-methylthiohexyl glucosinolate. Increased specific activity with increasing chain length of desulfo-glucosinolate derived from methionine. Preferred substrate is desulfo-8-methylthiooctyl glucosinolate. This chain is Cytosolic sulfotransferase 17 (SOT17), found in Arabidopsis thaliana (Mouse-ear cress).